The sequence spans 88 residues: DASH complex subunit HSK3 (88 aa).

Residues 1-15 (MSSRGSGANAASRQS) show a composition bias toward low complexity. The disordered stretch occupies residues 1–24 (MSSRGSGANAASRQSMTASGGAVK).

Belongs to the DASH complex HSK3 family. Component of the DASH complex consisting of ASK1, DAD1, DAD2, DAD3, DAD4, DAM1, DUO1, HSK3, SPC19 and SPC34, with a stoichiometry of one copy of each subunit per complex. Multiple DASH complexes oligomerize to form a ring that encircles spindle microtubules and organizes the rod-like NDC80 complexes of the outer kinetochore. DASH complex oligomerization strengthens microtubule attachments. On cytoplasmic microtubules, DASH complexes appear to form patches instead of rings.

The protein resides in the nucleus. Its subcellular location is the cytoplasm. It localises to the cytoskeleton. It is found in the spindle. The protein localises to the chromosome. The protein resides in the centromere. Its subcellular location is the kinetochore. In terms of biological role, component of the DASH complex that connects microtubules with kinetochores and couples microtubule depolymerisation to chromosome movement; it is involved in retrieving kinetochores to the spindle poles before their re-orientation on the spindle in early mitosis and allows microtubule depolymerization to pull chromosomes apart and resist detachment during anaphase. Kinetochores, consisting of a centromere-associated inner segment and a microtubule-contacting outer segment, play a crucial role in chromosome segregation by mediating the physical connection between centromeric DNA and microtubules. Kinetochores also serve as an input point for the spindle assembly checkpoint, which delays anaphase until all chromosomes have bioriented on the mitotic spindle. The chain is DASH complex subunit HSK3 from Chaetomium thermophilum (strain DSM 1495 / CBS 144.50 / IMI 039719) (Thermochaetoides thermophila).